The sequence spans 621 residues: uncharacterized protein (621 aa).

This sequence belongs to the chlamydial CPn_0512/CT_425/TC_0708 family.

This is an uncharacterized protein from Chlamydia muridarum (strain MoPn / Nigg).